The primary structure comprises 473 residues: Histone-lysine N-methyltransferase SET5 (473 aa).

One can recognise an SET domain in the interval 107-381; sequence ANVHIIMTSK…SGEELTTTYV (275 aa).

It belongs to the class V-like SAM-binding methyltransferase superfamily. Histone-lysine methyltransferase family. SET5 subfamily.

The protein resides in the nucleus. Its subcellular location is the chromosome. The protein localises to the cytoplasm. It catalyses the reaction L-lysyl-[histone] + S-adenosyl-L-methionine = N(6)-methyl-L-lysyl-[histone] + S-adenosyl-L-homocysteine + H(+). In terms of biological role, histone methyltransferase that monomethylates 'Lys-5', 'Lys-8' and 'Lys-12' of histone H4 (H4K5me1, H4K8me1 and H4K12me1, respectively), thereby controlling gene expression and remodeling chromatin structures. The polypeptide is Histone-lysine N-methyltransferase SET5 (SET5) (Candida albicans (strain SC5314 / ATCC MYA-2876) (Yeast)).